The primary structure comprises 100 residues: ATP synthase subunit g 2, mitochondrial (100 aa).

The protein belongs to the ATPase g subunit family. As to quaternary structure, F-type ATPases have 2 components, CF(1) - the catalytic core - and CF(0) - the membrane proton channel. CF(0) seems to have nine subunits: a, b, c, d, e, f, g, F6 and 8 (or A6L).

It localises to the mitochondrion membrane. In terms of biological role, mitochondrial membrane ATP synthase (F(1)F(0) ATP synthase or Complex V) produces ATP from ADP in the presence of a proton gradient across the membrane which is generated by electron transport complexes of the respiratory chain. F-type ATPases consist of two structural domains, F(1) - containing the extramembraneous catalytic core, and F(0) - containing the membrane proton channel, linked together by a central stalk and a peripheral stalk. During catalysis, ATP synthesis in the catalytic domain of F(1) is coupled via a rotary mechanism of the central stalk subunits to proton translocation. Part of the complex F(0) domain. Minor subunit located with subunit a in the membrane. The polypeptide is ATP synthase subunit g 2, mitochondrial (Homo sapiens (Human)).